The primary structure comprises 828 residues: Periplasmic nitrate reductase (828 aa).

Residues 1-31 (MKLSRRHFMKANAVAAAAAVAGITIPIAVRA) constitute a signal peptide (tat-type signal). A 4Fe-4S Mo/W bis-MGD-type domain is found at 39 to 95 (IHWDKAPCRFCGVGCGVLVGTQNGRIVASQGDPDAPVNRGLNCIKGYFLPKIMYGQD). [4Fe-4S] cluster-binding residues include cysteine 46, cysteine 49, cysteine 53, and cysteine 81. Mo-bis(molybdopterin guanine dinucleotide) contacts are provided by residues lysine 83, glutamine 150, asparagine 175, cysteine 179, 212 to 219 (WGSNMAEM), 243 to 247 (STYQH), 262 to 264 (QTD), methionine 372, glutamine 376, asparagine 482, 508 to 509 (SD), lysine 531, aspartate 558, and 718 to 727 (TGRVLEHWHT). Phenylalanine 794 is a substrate binding site. Residues asparagine 802 and lysine 819 each contribute to the Mo-bis(molybdopterin guanine dinucleotide) site.

It belongs to the prokaryotic molybdopterin-containing oxidoreductase family. NasA/NapA/NarB subfamily. Component of the periplasmic nitrate reductase NapAB complex composed of NapA and NapB. [4Fe-4S] cluster serves as cofactor. Requires Mo-bis(molybdopterin guanine dinucleotide) as cofactor. Post-translationally, predicted to be exported by the Tat system. The position of the signal peptide cleavage has not been experimentally proven.

It is found in the periplasm. The enzyme catalyses 2 Fe(II)-[cytochrome] + nitrate + 2 H(+) = 2 Fe(III)-[cytochrome] + nitrite + H2O. Functionally, catalytic subunit of the periplasmic nitrate reductase complex NapAB. Receives electrons from NapB and catalyzes the reduction of nitrate to nitrite. This Pectobacterium carotovorum subsp. carotovorum (strain PC1) protein is Periplasmic nitrate reductase.